The chain runs to 276 residues: Protein PXR1 (276 aa).

The segment at 1-23 (MGLAGTKIKQRFGNDPRNTNWSN) is disordered. In terms of domain architecture, G-patch spans 25–71 (TSRFGHQYLAKMGWQQGSGLGLVSHALTTHVKVSIKDDNLGLGAKLH). Residues 152 to 172 (DDGKKSRKRKADESETKEDKK) are compositionally biased toward basic and acidic residues. The disordered stretch occupies residues 152–261 (DDGKKSRKRK…SKWIKQKRAS (110 aa)). Basic residues predominate over residues 173-218 (TLKKHKKEKKDKKEKKEKKKKKEKKDKKDKKDKKNKKDKKDKKDKK). Residues 219–228 (DKKDKIRTGS) are compositionally biased toward basic and acidic residues. Over residues 229–239 (DETLVSKESSA) the composition is skewed to polar residues.

Belongs to the PINX1 family.

It is found in the nucleus. It localises to the nucleolus. In terms of biological role, involved in rRNA-processing at A0, A1 and A2 sites and negatively regulates telomerase. This is Protein PXR1 (PXR1) from Candida albicans (strain SC5314 / ATCC MYA-2876) (Yeast).